We begin with the raw amino-acid sequence, 89 residues long: Insulin (89 aa).

Cystine bridges form between Cys7–Cys75, Cys19–Cys88, and Cys74–Cys79. Residues 33-66 constitute a propeptide, c peptide; it reads DVGPLSAFRDLEPPLDTEMEDRFPYRQQLAGSKM.

The protein belongs to the insulin family. In terms of assembly, heterodimer of a B chain and an A chain linked by two disulfide bonds.

The protein resides in the secreted. Insulin decreases blood glucose concentration. It increases cell permeability to monosaccharides, amino acids and fatty acids. It accelerates glycolysis, the pentose phosphate cycle, and glycogen synthesis in liver. In Callorhinchus milii (Ghost shark), this protein is Insulin (ins).